The following is a 237-amino-acid chain: tRNA (guanine-N(1)-)-methyltransferase (237 aa).

Residues G113 and V133–V138 each bind S-adenosyl-L-methionine.

The protein belongs to the RNA methyltransferase TrmD family. In terms of assembly, homodimer.

The protein localises to the cytoplasm. It catalyses the reaction guanosine(37) in tRNA + S-adenosyl-L-methionine = N(1)-methylguanosine(37) in tRNA + S-adenosyl-L-homocysteine + H(+). Specifically methylates guanosine-37 in various tRNAs. This chain is tRNA (guanine-N(1)-)-methyltransferase, found in Hydrogenovibrio crunogenus (strain DSM 25203 / XCL-2) (Thiomicrospira crunogena).